The primary structure comprises 393 residues: S-adenosylmethionine synthase (393 aa).

Residue H16 participates in ATP binding. Mg(2+) is bound at residue D18. Residue E44 coordinates K(+). 2 residues coordinate L-methionine: E57 and Q100. The segment at Q100–H110 is flexible loop. ATP contacts are provided by residues D167–K169, R238–F239, D247, R253–K254, A270, and K274. Residue D247 coordinates L-methionine. K278 contributes to the L-methionine binding site.

The protein belongs to the AdoMet synthase family. Homotetramer; dimer of dimers. Requires Mg(2+) as cofactor. It depends on K(+) as a cofactor.

The protein localises to the cytoplasm. The enzyme catalyses L-methionine + ATP + H2O = S-adenosyl-L-methionine + phosphate + diphosphate. It participates in amino-acid biosynthesis; S-adenosyl-L-methionine biosynthesis; S-adenosyl-L-methionine from L-methionine: step 1/1. Catalyzes the formation of S-adenosylmethionine (AdoMet) from methionine and ATP. The overall synthetic reaction is composed of two sequential steps, AdoMet formation and the subsequent tripolyphosphate hydrolysis which occurs prior to release of AdoMet from the enzyme. In Albidiferax ferrireducens (strain ATCC BAA-621 / DSM 15236 / T118) (Rhodoferax ferrireducens), this protein is S-adenosylmethionine synthase.